A 219-amino-acid chain; its full sequence is Transcriptional regulator AcuR (219 aa).

The tract at residues 1–25 (MPLTDTPPSVPQKPRRGRPRGAPDA) is disordered. Residues 26 to 86 (SLAHQSLIRA…ALIEAYDTYF (61 aa)) enclose the HTH tetR-type domain. A DNA-binding region (H-T-H motif) is located at residues 49 to 68 (GVDEILKAARVPKGSFYHYF).

In terms of biological role, a transcriptional repressor for its operon. Probably binds to 2 operator sequences in the promoter. The chain is Transcriptional regulator AcuR (acuR) from Cereibacter sphaeroides (strain ATCC 17023 / DSM 158 / JCM 6121 / CCUG 31486 / LMG 2827 / NBRC 12203 / NCIMB 8253 / ATH 2.4.1.) (Rhodobacter sphaeroides).